A 427-amino-acid polypeptide reads, in one-letter code: Serine--tRNA ligase (427 aa).

Position 231 to 233 (231 to 233 (TAE)) interacts with L-serine. 262–264 (RSE) lines the ATP pocket. Residue E285 coordinates L-serine. 349–352 (EISS) is an ATP binding site. S385 lines the L-serine pocket.

This sequence belongs to the class-II aminoacyl-tRNA synthetase family. Type-1 seryl-tRNA synthetase subfamily. As to quaternary structure, homodimer. The tRNA molecule binds across the dimer.

The protein localises to the cytoplasm. The catalysed reaction is tRNA(Ser) + L-serine + ATP = L-seryl-tRNA(Ser) + AMP + diphosphate + H(+). It carries out the reaction tRNA(Sec) + L-serine + ATP = L-seryl-tRNA(Sec) + AMP + diphosphate + H(+). Its pathway is aminoacyl-tRNA biosynthesis; selenocysteinyl-tRNA(Sec) biosynthesis; L-seryl-tRNA(Sec) from L-serine and tRNA(Sec): step 1/1. Its function is as follows. Catalyzes the attachment of serine to tRNA(Ser). Is also able to aminoacylate tRNA(Sec) with serine, to form the misacylated tRNA L-seryl-tRNA(Sec), which will be further converted into selenocysteinyl-tRNA(Sec). The protein is Serine--tRNA ligase of Exiguobacterium sp. (strain ATCC BAA-1283 / AT1b).